Consider the following 338-residue polypeptide: 1-aminocyclopropane-1-carboxylate deaminase (338 aa).

Lysine 51 bears the N6-(pyridoxal phosphate)lysine mark. Serine 78 serves as the catalytic Nucleophile.

It belongs to the ACC deaminase/D-cysteine desulfhydrase family. As to quaternary structure, homotrimer. Pyridoxal 5'-phosphate is required as a cofactor.

The enzyme catalyses 1-aminocyclopropane-1-carboxylate + H2O = 2-oxobutanoate + NH4(+). Functionally, catalyzes a cyclopropane ring-opening reaction, the irreversible conversion of 1-aminocyclopropane-1-carboxylate (ACC) to ammonia and alpha-ketobutyrate. Allows growth on ACC as a nitrogen source. The sequence is that of 1-aminocyclopropane-1-carboxylate deaminase from Ralstonia nicotianae (strain ATCC BAA-1114 / GMI1000) (Ralstonia solanacearum).